Consider the following 278-residue polypeptide: Putative ABC transporter ATP-binding protein MTBMA_c05830 (278 aa).

The ABC transporter domain occupies 4–239 (IEAVNIRYTY…IDTIRGADLR (236 aa)). ATP is bound at residue 37–44 (GPNGAGKS).

It belongs to the ABC transporter superfamily.

The protein resides in the cell membrane. In terms of biological role, probably part of an ABC transporter complex. Responsible for energy coupling to the transport system. In Methanothermobacter marburgensis (strain ATCC BAA-927 / DSM 2133 / JCM 14651 / NBRC 100331 / OCM 82 / Marburg) (Methanobacterium thermoautotrophicum), this protein is Putative ABC transporter ATP-binding protein MTBMA_c05830.